The chain runs to 505 residues: MLLSLLIIIPFLSSFFSFFSPRLHNNFPRWIALSGIIATLLVVIQIFFQENYHIFQIRHYPNWNCQLIVPWISRFGIEFNIALDGLSIIMLIFSSFLSIIAIICSWNEIKKNEGFFYFNFMLVFTGIIGVFISCDLFLFFCFWEIMLIPMYFLIALWSDKTEKKKNFLAANKFFLYSQTSGLILLSSILLLVFSHYYSTNILTFNYNLLINKPINIYVEYIVMIGFFLSFAIKMPIVPFHGWLPDIHSRSLSCGSVEIIGVLLKTAPYALLRYNLVLFPDSTKSFSLIAVFWGIISIFYGAWIAFSQTNIKRLIAYSSVSHMGLILIGIYSNNERALQGVVIQMLSNSLTVAALCILSGQIYKRFKTQDMSKMGGLWSCIYWIPGFSLFFSLANLGVPGTGNFIGEFLILSGVFEVFPLVSILATIGIVFSSIYSLNVIQKIFYGPCKQNIKVFFINKQEVWTIIALVFTLVFLGLNPQKIIDVSYNSIHNIQKEFNNSILKIRS.

A run of 12 helical transmembrane segments spans residues 30-50, 86-106, 114-134, 136-156, 173-193, 221-241, 251-271, 285-305, 313-333, 373-393, 409-429, and 462-482; these read WIALSGIIATLLVVIQIFFQE, LSIIMLIFSSFLSIIAIICSW, GFFYFNFMLVFTGIIGVFISC, LFLFFCFWEIMLIPMYFLIAL, FFLYSQTSGLILLSSILLLVF, IVMIGFFLSFAIKMPIVPFHG, LSCGSVEIIGVLLKTAPYALL, FSLIAVFWGIISIFYGAWIAF, LIAYSSVSHMGLILIGIYSNN, MGGLWSCIYWIPGFSLFFSLA, ILSGVFEVFPLVSILATIGIV, and WTIIALVFTLVFLGLNPQKII.

It belongs to the complex I subunit 4 family. Composed of 13 different subunits. Subunits NuoA, H, J, K, L, M, N constitute the membrane sector of the complex.

The protein resides in the cell membrane. It carries out the reaction a quinone + NADH + 5 H(+)(in) = a quinol + NAD(+) + 4 H(+)(out). Functionally, NDH-1 shuttles electrons from NADH, via FMN and iron-sulfur (Fe-S) centers, to quinones in the respiratory chain. Couples the redox reaction to proton translocation (for every two electrons transferred, four hydrogen ions are translocated across the cytoplasmic membrane), and thus conserves the redox energy in a proton gradient. The sequence is that of NADH-quinone oxidoreductase subunit M (nuoM) from Buchnera aphidicola subsp. Acyrthosiphon pisum (strain APS) (Acyrthosiphon pisum symbiotic bacterium).